We begin with the raw amino-acid sequence, 427 residues long: 11-beta-hydroxysteroid dehydrogenase type 2 (427 aa).

82–111 (TRAVLITGCDSGFGNATAKKLDAMGFTVLA) lines the NAD(+) pocket. A substrate-binding site is contributed by Ser219. Tyr232 acts as the Proton acceptor in catalysis.

It belongs to the short-chain dehydrogenases/reductases (SDR) family. In terms of assembly, interacts with ligand-free cytoplasmic NR3C2. In terms of tissue distribution, highly expressed in the kidney and adrenal and at lower levels in the colon.

The protein localises to the microsome. Its subcellular location is the endoplasmic reticulum. The catalysed reaction is an 11beta-hydroxysteroid + NAD(+) = an 11-oxosteroid + NADH + H(+). It carries out the reaction corticosterone + NAD(+) = 11-dehydrocorticosterone + NADH + H(+). It catalyses the reaction cortisol + NAD(+) = cortisone + NADH + H(+). The enzyme catalyses 11beta,17beta-dihydroxyandrost-4-ene-3-one + NAD(+) = 17beta-hydroxyandrost-4-ene-3,11-dione + NADH + H(+). The catalysed reaction is 11beta-hydroxyandrost-4-ene-3,17-dione + NAD(+) = androst-4-ene-3,11,17-trione + NADH + H(+). It functions in the pathway steroid metabolism. Inhibited by glycyrrhetinic acid, carbenoloxone, 11-alpha-OH-progesterone and 11-beta-OH-progesterone. Catalyzes the conversion of biologically active 11beta-hydroxyglucocorticoids (11beta-hydroxysteroid) such as cortisol, to inactive 11-ketoglucocorticoids (11-oxosteroid) such as cortisone, in the presence of NAD(+). Functions as a dehydrogenase (oxidase), thereby decreasing the concentration of active glucocorticoids, thus protecting the nonselective mineralocorticoid receptor from occupation by glucocorticoids. Plays an important role in maintaining glucocorticoids balance during preimplantation and protects the fetus from excessive maternal corticosterone exposure. Catalyzes the oxidation of 11beta-hydroxytestosterone (11beta,17beta-dihydroxyandrost-4-ene-3-one) to 11-ketotestosterone (17beta-hydroxyandrost-4-ene-3,11-dione), a major bioactive androgen. Catalyzes the conversion of 11beta-hydroxyandrostenedione (11beta-hydroxyandrost-4-ene-3,17-dione) to 11-ketoandrostenedione (androst-4-ene-3,11,17-trione), which can be further metabolized to 11-ketotestosterone. Converts 7-beta-25-dihydroxycholesterol to 7-oxo-25-hydroxycholesterol in vitro. 7-beta-25-dihydroxycholesterol (not 7-oxo-25-hydroxycholesterol) acts as a ligand for the G-protein-coupled receptor (GPCR) Epstein-Barr virus-induced gene 2 (EBI2) and may thereby regulate immune cell migration. May protect ovulating oocytes and fertilizing spermatozoa from the adverse effects of cortisol. This is 11-beta-hydroxysteroid dehydrogenase type 2 (HSD11B2) from Ovis aries (Sheep).